The primary structure comprises 310 residues: Aspartate carbamoyltransferase catalytic subunit (310 aa).

Positions 58 and 59 each coordinate carbamoyl phosphate. K86 provides a ligand contact to L-aspartate. Positions 108, 136, and 139 each coordinate carbamoyl phosphate. The L-aspartate site is built by R169 and R224. Carbamoyl phosphate is bound by residues G265 and P266.

The protein belongs to the aspartate/ornithine carbamoyltransferase superfamily. ATCase family. As to quaternary structure, heterododecamer (2C3:3R2) of six catalytic PyrB chains organized as two trimers (C3), and six regulatory PyrI chains organized as three dimers (R2).

It catalyses the reaction carbamoyl phosphate + L-aspartate = N-carbamoyl-L-aspartate + phosphate + H(+). It participates in pyrimidine metabolism; UMP biosynthesis via de novo pathway; (S)-dihydroorotate from bicarbonate: step 2/3. Functionally, catalyzes the condensation of carbamoyl phosphate and aspartate to form carbamoyl aspartate and inorganic phosphate, the committed step in the de novo pyrimidine nucleotide biosynthesis pathway. The protein is Aspartate carbamoyltransferase catalytic subunit of Geobacter sp. (strain M21).